Reading from the N-terminus, the 445-residue chain is Squalene synthase (445 aa).

2 helical membrane-spanning segments follow: residues 291-311 and 405-425; these read STFT…DLVY and LIVC…IAYV.

This sequence belongs to the phytoene/squalene synthase family. Mg(2+) serves as cofactor.

Its subcellular location is the endoplasmic reticulum membrane. It catalyses the reaction 2 (2E,6E)-farnesyl diphosphate + NADPH + H(+) = squalene + 2 diphosphate + NADP(+). The catalysed reaction is 2 (2E,6E)-farnesyl diphosphate + NADH + H(+) = squalene + 2 diphosphate + NAD(+). The protein operates within terpene metabolism; lanosterol biosynthesis; lanosterol from farnesyl diphosphate: step 1/3. Catalyzes the condensation of 2 two farnesyl pyrophosphate moieties to form squalene. It is the first committed enzyme of the sterol biosynthesis pathway. Required for the biosynthesis of ergosterol. This Yarrowia lipolytica (strain CLIB 122 / E 150) (Yeast) protein is Squalene synthase (SQS1).